Reading from the N-terminus, the 134-residue chain is MIKKYEGCFLFRSEELEYKSALEEVKKQLVAFGAVDFVENSIGERALEYPVRKQLRGRYEIIEFKMASDNLRELEAQLKLIKNLLRYMILVKINRKVSVKKVKRRNFREYRDNRDIKEKEQPSESNVDADLKVN.

Residues 113 to 122 show a composition bias toward basic and acidic residues; sequence NRDIKEKEQP. A disordered region spans residues 113-134; that stretch reads NRDIKEKEQPSESNVDADLKVN.

It belongs to the bacterial ribosomal protein bS6 family.

In terms of biological role, binds together with bS18 to 16S ribosomal RNA. The sequence is that of Small ribosomal subunit protein bS6 from Borrelia duttonii (strain Ly).